Here is a 129-residue protein sequence, read N- to C-terminus: Small ribosomal subunit protein uS8 (129 aa).

Belongs to the universal ribosomal protein uS8 family. Part of the 30S ribosomal subunit. Contacts proteins S5 and S12.

Its function is as follows. One of the primary rRNA binding proteins, it binds directly to 16S rRNA central domain where it helps coordinate assembly of the platform of the 30S subunit. This chain is Small ribosomal subunit protein uS8, found in Spiroplasma kunkelii.